We begin with the raw amino-acid sequence, 299 residues long: tRNA dimethylallyltransferase (299 aa).

Position 22–29 (22–29) interacts with ATP; it reads GPTASGKT. A substrate-binding site is contributed by 24–29; sequence TASGKT. Interaction with substrate tRNA regions lie at residues 47–50 and 172–176; these read DSRQ and QRLLR.

Belongs to the IPP transferase family. In terms of assembly, monomer. Mg(2+) is required as a cofactor.

The enzyme catalyses adenosine(37) in tRNA + dimethylallyl diphosphate = N(6)-dimethylallyladenosine(37) in tRNA + diphosphate. Its function is as follows. Catalyzes the transfer of a dimethylallyl group onto the adenine at position 37 in tRNAs that read codons beginning with uridine, leading to the formation of N6-(dimethylallyl)adenosine (i(6)A). The polypeptide is tRNA dimethylallyltransferase (Endomicrobium trichonymphae).